We begin with the raw amino-acid sequence, 325 residues long: Undecaprenyl-phosphate 4-deoxy-4-formamido-L-arabinose transferase (325 aa).

2 consecutive transmembrane segments (helical) span residues 235-255 (LSVVGSVIAVSGFLLAVLLMV) and 269-291 (VFTLFALLFIFIGAQFVAMGLLG).

This sequence belongs to the glycosyltransferase 2 family.

Its subcellular location is the cell inner membrane. The catalysed reaction is UDP-4-deoxy-4-formamido-beta-L-arabinose + di-trans,octa-cis-undecaprenyl phosphate = 4-deoxy-4-formamido-alpha-L-arabinopyranosyl di-trans,octa-cis-undecaprenyl phosphate + UDP. It participates in glycolipid biosynthesis; 4-amino-4-deoxy-alpha-L-arabinose undecaprenyl phosphate biosynthesis; 4-amino-4-deoxy-alpha-L-arabinose undecaprenyl phosphate from UDP-4-deoxy-4-formamido-beta-L-arabinose and undecaprenyl phosphate: step 1/2. The protein operates within bacterial outer membrane biogenesis; lipopolysaccharide biosynthesis. Functionally, catalyzes the transfer of 4-deoxy-4-formamido-L-arabinose from UDP to undecaprenyl phosphate. The modified arabinose is attached to lipid A and is required for resistance to polymyxin and cationic antimicrobial peptides. Essential for virulence in insects. This Photorhabdus laumondii subsp. laumondii (strain DSM 15139 / CIP 105565 / TT01) (Photorhabdus luminescens subsp. laumondii) protein is Undecaprenyl-phosphate 4-deoxy-4-formamido-L-arabinose transferase.